The primary structure comprises 209 residues: uncharacterized protein (209 aa).

Residues Ser-119 and His-160 each act as charge relay system in the active site.

It belongs to the peptidase S51 family.

This is an uncharacterized protein from Listeria innocua serovar 6a (strain ATCC BAA-680 / CLIP 11262).